The chain runs to 217 residues: Pyrophosphatase PpaX (217 aa).

Asp-11 (nucleophile) is an active-site residue.

This sequence belongs to the HAD-like hydrolase superfamily. PpaX family. It depends on Mg(2+) as a cofactor.

It catalyses the reaction diphosphate + H2O = 2 phosphate + H(+). Hydrolyzes pyrophosphate formed during P-Ser-HPr dephosphorylation by HPrK/P. Might play a role in controlling the intracellular pyrophosphate pool. The chain is Pyrophosphatase PpaX from Listeria innocua serovar 6a (strain ATCC BAA-680 / CLIP 11262).